A 1375-amino-acid chain; its full sequence is ARF guanine-nucleotide exchange factor GNL2 (1375 aa).

The SEC7 domain occupies 486-676 (HIRVRKAQKR…SELFQSIATN (191 aa)). The active site involves glutamate 590.

As to quaternary structure, homodimer. Preferentially expressed in mature pollen grains and growing pollen tubes.

It localises to the cytoplasm. It is found in the cytosol. The protein resides in the membrane. Activates the ARF proteins by exchanging bound GDP for free GTP. Plays a role in vesicular protein sorting. Essential for pollen germination. The chain is ARF guanine-nucleotide exchange factor GNL2 (GNL2) from Arabidopsis thaliana (Mouse-ear cress).